The chain runs to 82 residues: Costars family protein v1g158749 (82 aa).

This sequence belongs to the costars family.

The protein is Costars family protein v1g158749 of Nematostella vectensis (Starlet sea anemone).